We begin with the raw amino-acid sequence, 134 residues long: Transcription antitermination protein NusB (134 aa).

Belongs to the NusB family.

Its function is as follows. Involved in transcription antitermination. Required for transcription of ribosomal RNA (rRNA) genes. Binds specifically to the boxA antiterminator sequence of the ribosomal RNA (rrn) operons. The sequence is that of Transcription antitermination protein NusB from Shewanella woodyi (strain ATCC 51908 / MS32).